A 146-amino-acid chain; its full sequence is Anti-sigma F factor (146 aa).

This sequence belongs to the anti-sigma-factor family.

The enzyme catalyses L-seryl-[protein] + ATP = O-phospho-L-seryl-[protein] + ADP + H(+). The catalysed reaction is L-threonyl-[protein] + ATP = O-phospho-L-threonyl-[protein] + ADP + H(+). Binds to sigma F and blocks its ability to form an RNA polymerase holoenzyme (E-sigma F). Phosphorylates SpoIIAA on a serine residue. This phosphorylation may enable SpoIIAA to act as an anti-anti-sigma factor that counteracts SpoIIAB and thus releases sigma F from inhibition. The polypeptide is Anti-sigma F factor (Bacillus cereus (strain G9842)).